A 184-amino-acid polypeptide reads, in one-letter code: Ribosome-recycling factor (184 aa).

It belongs to the RRF family.

It is found in the cytoplasm. In terms of biological role, responsible for the release of ribosomes from messenger RNA at the termination of protein biosynthesis. May increase the efficiency of translation by recycling ribosomes from one round of translation to another. This chain is Ribosome-recycling factor, found in Stenotrophomonas maltophilia (strain R551-3).